The following is a 283-amino-acid chain: uncharacterized protein (283 aa).

Residues 1–23 (MFAFASFAISAIFFLCSFSYVSS) form the signal peptide.

It is found in the secreted. This is an uncharacterized protein from Schizosaccharomyces pombe (strain 972 / ATCC 24843) (Fission yeast).